A 650-amino-acid chain; its full sequence is Acetyl-coenzyme A synthetase (650 aa).

CoA-binding positions include 191–194 (RGGR), threonine 311, and asparagine 335. Residues 387-389 (GEP), 411-416 (DTWWQT), aspartate 501, and arginine 516 each bind ATP. Serine 524 is a CoA binding site. Residue arginine 527 participates in ATP binding. Residues valine 538, histidine 540, and isoleucine 543 each contribute to the Mg(2+) site. Arginine 585 contributes to the CoA binding site. Lysine 610 carries the post-translational modification N6-acetyllysine.

Belongs to the ATP-dependent AMP-binding enzyme family. Mg(2+) serves as cofactor. In terms of processing, acetylated. Deacetylation by the SIR2-homolog deacetylase activates the enzyme.

It carries out the reaction acetate + ATP + CoA = acetyl-CoA + AMP + diphosphate. Catalyzes the conversion of acetate into acetyl-CoA (AcCoA), an essential intermediate at the junction of anabolic and catabolic pathways. AcsA undergoes a two-step reaction. In the first half reaction, AcsA combines acetate with ATP to form acetyl-adenylate (AcAMP) intermediate. In the second half reaction, it can then transfer the acetyl group from AcAMP to the sulfhydryl group of CoA, forming the product AcCoA. This is Acetyl-coenzyme A synthetase from Vibrio parahaemolyticus serotype O3:K6 (strain RIMD 2210633).